Here is a 303-residue protein sequence, read N- to C-terminus: Regulatory protein PocR (303 aa).

The 99-residue stretch at 195–293 (KKALRYIDAH…QVTPQAYRQQ (99 aa)) folds into the HTH araC/xylS-type domain. 2 DNA-binding regions (H-T-H motif) span residues 212-233 (EDVA…KKYQ) and 260-283 (IASI…RQTY).

It participates in cofactor biosynthesis; adenosylcobalamin biosynthesis [regulation]. The protein operates within polyol metabolism; 1,2-propanediol degradation [regulation]. Its function is as follows. Positive regulatory protein of pdu and cob operons. Positively autoregulates its own expression. In Salmonella typhimurium (strain LT2 / SGSC1412 / ATCC 700720), this protein is Regulatory protein PocR (pocR).